The chain runs to 334 residues: Retinol dehydrogenase 14 (334 aa).

Residue 51-57 (GANSGLG) coordinates NADP(+). Substrate is bound at residue Ser190. Tyr215 functions as the Proton acceptor in the catalytic mechanism.

Belongs to the short-chain dehydrogenases/reductases (SDR) family.

It carries out the reaction all-trans-retinol + NADP(+) = all-trans-retinal + NADPH + H(+). The catalysed reaction is 11-cis-retinol + NADP(+) = 11-cis-retinal + NADPH + H(+). The enzyme catalyses 9-cis-retinol + NADP(+) = 9-cis-retinal + NADPH + H(+). Its function is as follows. Retinol dehydrogenase with a clear preference for NADP. Displays high activity towards 9-cis, 11-cis and all-trans-retinol. Shows a very weak activity towards 13-cis-retinol. Has no activity towards steroids. This Mus musculus (Mouse) protein is Retinol dehydrogenase 14 (Rdh14).